Reading from the N-terminus, the 488-residue chain is Glutamyl-tRNA(Gln) amidotransferase subunit A (488 aa).

Residues Lys77 and Ser152 each act as charge relay system in the active site. The active-site Acyl-ester intermediate is Ser176.

This sequence belongs to the amidase family. GatA subfamily. Heterotrimer of A, B and C subunits.

It carries out the reaction L-glutamyl-tRNA(Gln) + L-glutamine + ATP + H2O = L-glutaminyl-tRNA(Gln) + L-glutamate + ADP + phosphate + H(+). Allows the formation of correctly charged Gln-tRNA(Gln) through the transamidation of misacylated Glu-tRNA(Gln) in organisms which lack glutaminyl-tRNA synthetase. The reaction takes place in the presence of glutamine and ATP through an activated gamma-phospho-Glu-tRNA(Gln). The protein is Glutamyl-tRNA(Gln) amidotransferase subunit A of Latilactobacillus sakei subsp. sakei (strain 23K) (Lactobacillus sakei subsp. sakei).